The chain runs to 213 residues: 3-isopropylmalate dehydratase small subunit (213 aa).

It belongs to the LeuD family. LeuD type 1 subfamily. Heterodimer of LeuC and LeuD.

The enzyme catalyses (2R,3S)-3-isopropylmalate = (2S)-2-isopropylmalate. The protein operates within amino-acid biosynthesis; L-leucine biosynthesis; L-leucine from 3-methyl-2-oxobutanoate: step 2/4. Functionally, catalyzes the isomerization between 2-isopropylmalate and 3-isopropylmalate, via the formation of 2-isopropylmaleate. The polypeptide is 3-isopropylmalate dehydratase small subunit (Neisseria meningitidis serogroup C (strain 053442)).